A 354-amino-acid chain; its full sequence is 3-dehydroquinate synthase (354 aa).

NAD(+) contacts are provided by residues 100-104, 124-125, Lys-136, Lys-145, and 163-166; these read GATGD, TT, and FLKT. Zn(2+) is bound by residues Glu-178, His-242, and His-256.

It belongs to the sugar phosphate cyclases superfamily. Dehydroquinate synthase family. Co(2+) serves as cofactor. The cofactor is Zn(2+). It depends on NAD(+) as a cofactor.

It is found in the cytoplasm. It catalyses the reaction 7-phospho-2-dehydro-3-deoxy-D-arabino-heptonate = 3-dehydroquinate + phosphate. Its pathway is metabolic intermediate biosynthesis; chorismate biosynthesis; chorismate from D-erythrose 4-phosphate and phosphoenolpyruvate: step 2/7. In terms of biological role, catalyzes the conversion of 3-deoxy-D-arabino-heptulosonate 7-phosphate (DAHP) to dehydroquinate (DHQ). In Staphylococcus aureus (strain NCTC 8325 / PS 47), this protein is 3-dehydroquinate synthase.